A 202-amino-acid polypeptide reads, in one-letter code: Probable 1-Cys peroxiredoxin (202 aa).

A Thioredoxin domain is found at 1–148 (STHGKIRIHD…VVRAVDSLLT (148 aa)). The active-site Cysteine sulfenic acid (-SOH) intermediate is C30. The Bipartite nuclear localization signal signature appears at 178 to 201 (KKLFPQGFETKDLPSKKGYLRFTK).

It belongs to the peroxiredoxin family. Prx6 subfamily. As to expression, embryos.

Its subcellular location is the nucleus. The protein localises to the cytoplasm. The enzyme catalyses a hydroperoxide + [thioredoxin]-dithiol = an alcohol + [thioredoxin]-disulfide + H2O. In terms of biological role, thiol-specific peroxidase that catalyzes the reduction of hydrogen peroxide and organic hydroperoxides to water and alcohols, respectively. Seems to contribute to the inhibition of germination during stress. The sequence is that of Probable 1-Cys peroxiredoxin from Bromus secalinus (Rye brome).